Reading from the N-terminus, the 155-residue chain is Ribosomal RNA large subunit methyltransferase H (155 aa).

S-adenosyl-L-methionine-binding positions include L72, G103, and 122 to 127 (LSPLTL).

The protein belongs to the RNA methyltransferase RlmH family. In terms of assembly, homodimer.

It localises to the cytoplasm. The enzyme catalyses pseudouridine(1915) in 23S rRNA + S-adenosyl-L-methionine = N(3)-methylpseudouridine(1915) in 23S rRNA + S-adenosyl-L-homocysteine + H(+). In terms of biological role, specifically methylates the pseudouridine at position 1915 (m3Psi1915) in 23S rRNA. The protein is Ribosomal RNA large subunit methyltransferase H of Haemophilus influenzae (strain PittGG).